Reading from the N-terminus, the 549-residue chain is Elongator complex protein 3 (549 aa).

The Radical SAM core domain occupies 84–374 (RTASGIAVVA…YRVQRDIPMP (291 aa)). Cys101, Cys111, and Cys114 together coordinate [4Fe-4S] cluster. Acetyl-CoA-binding positions include Lys166, 476–479 (ELHV), 499–501 (FGM), and Tyr532. Residues 398–549 (TECRDVRTRE…EGPYMVKKLD (152 aa)) form the N-acetyltransferase domain.

The protein belongs to the ELP3 family. Component of the elongator complex. Interacts with transcriptional repressors snai1 and snai2; interaction with snai1 inhibits its ubiquitination and stabilizes it. [4Fe-4S] cluster serves as cofactor.

The protein resides in the cytoplasm. The protein localises to the nucleus. It carries out the reaction uridine(34) in tRNA + acetyl-CoA + S-adenosyl-L-methionine + H2O = 5-(carboxymethyl)uridine(34) in tRNA + 5'-deoxyadenosine + L-methionine + CoA + 2 H(+). Its pathway is tRNA modification; 5-methoxycarbonylmethyl-2-thiouridine-tRNA biosynthesis. In terms of biological role, catalytic tRNA acetyltransferase subunit of the elongator complex which is required for multiple tRNA modifications, including mcm5U (5-methoxycarbonylmethyl uridine), mcm5s2U (5-methoxycarbonylmethyl-2-thiouridine), and ncm5U (5-carbamoylmethyl uridine). In the elongator complex, acts as a tRNA uridine(34) acetyltransferase by mediating formation of carboxymethyluridine in the wobble base at position 34 in tRNAs. Stabilizes transcriptional repressor snai1 by inhibiting its ubiquitination which promotes neural crest cell migration. The sequence is that of Elongator complex protein 3 from Xenopus tropicalis (Western clawed frog).